Reading from the N-terminus, the 348-residue chain is Phospho-2-dehydro-3-deoxyheptonate aldolase, Trp-sensitive (348 aa).

Belongs to the class-I DAHP synthase family.

The enzyme catalyses D-erythrose 4-phosphate + phosphoenolpyruvate + H2O = 7-phospho-2-dehydro-3-deoxy-D-arabino-heptonate + phosphate. The protein operates within metabolic intermediate biosynthesis; chorismate biosynthesis; chorismate from D-erythrose 4-phosphate and phosphoenolpyruvate: step 1/7. Stereospecific condensation of phosphoenolpyruvate (PEP) and D-erythrose-4-phosphate (E4P) giving rise to 3-deoxy-D-arabino-heptulosonate-7-phosphate (DAHP). The polypeptide is Phospho-2-dehydro-3-deoxyheptonate aldolase, Trp-sensitive (aroH) (Escherichia coli O157:H7).